A 363-amino-acid polypeptide reads, in one-letter code: Histidinol-phosphate aminotransferase (363 aa).

At K218 the chain carries N6-(pyridoxal phosphate)lysine.

The protein belongs to the class-II pyridoxal-phosphate-dependent aminotransferase family. Histidinol-phosphate aminotransferase subfamily. In terms of assembly, homodimer. It depends on pyridoxal 5'-phosphate as a cofactor.

The catalysed reaction is L-histidinol phosphate + 2-oxoglutarate = 3-(imidazol-4-yl)-2-oxopropyl phosphate + L-glutamate. The protein operates within amino-acid biosynthesis; L-histidine biosynthesis; L-histidine from 5-phospho-alpha-D-ribose 1-diphosphate: step 7/9. In Xanthomonas oryzae pv. oryzae (strain MAFF 311018), this protein is Histidinol-phosphate aminotransferase.